The chain runs to 394 residues: Potassium channel subfamily K member 3 (394 aa).

Topologically, residues 1-8 (MKRQNVRT) are cytoplasmic. Residues 9–29 (LALIVCTFTYLLVGAAVFDAL) form a helical membrane-spanning segment. Residue asparagine 53 is glycosylated (N-linked (GlcNAc...) asparagine). Residues 78-101 (WRFAGSFYFAITVITTIGYGHAAP) constitute an intramembrane region (pore-forming). Threonine 93, isoleucine 94, glycine 95, and tyrosine 96 together coordinate K(+). Residues 93 to 98 (TIGYGH) are selectivity filter 1. The chain crosses the membrane as a helical span at residues 108-128 (VFCMFYALLGIPLTLVMFQSL). At 129-158 (GERINTLVRYLLHRAKKGLGMRRADVSMAN) the chain is on the cytoplasmic side. The chain crosses the membrane as a helical span at residues 159–179 (MVLIGFFSCISTLCIGAAAFS). The segment at residues 184–207 (WTFFQAYYYCFITLTTIGFGDYVA) is an intramembrane region (pore-forming). K(+) contacts are provided by threonine 199, isoleucine 200, glycine 201, and phenylalanine 202. The interval 199–204 (TIGFGD) is selectivity filter 2. Residues 223–243 (FSFVYILTGLTVIGAFLNLVV) form a helical membrane-spanning segment. Positions 243-248 (VLRFMT) are X-gate. At 244–394 (LRFMTMNAED…RGLMKRRSSV (151 aa)) the chain is on the cytoplasmic side. Disordered stretches follow at residues 266–286 (RNGQAGGGGGGGSAHTTDTAS) and 338–357 (TCVEQSHSSPGGGGRYSDTP). The span at 269-278 (QAGGGGGGGS) shows a compositional bias: gly residues.

It belongs to the two pore domain potassium channel (TC 1.A.1.8) family. In terms of assembly, homodimer. Heterodimer with KCNK1. Heterodimer with KCNK9. As to expression, widespread expression in adult. Strongest expression in pancreas and placenta. Lower expression in brain, lung, prostate, heart, kidney, uterus, small intestine and colon.

The protein localises to the cell membrane. The catalysed reaction is K(+)(in) = K(+)(out). The enzyme catalyses Na(+)(in) = Na(+)(out). Its activity is regulated as follows. Inhibited by external acidification, diacylglycerol and anandamide. Activated by halothane and isoflurane. Its function is as follows. K(+) channel that conducts voltage-dependent outward rectifying currents upon membrane depolarization. Voltage sensing is coupled to K(+) electrochemical gradient in an 'ion flux gating' mode where outward but not inward ion flow opens the gate. Changes ion selectivity and becomes permeable to Na(+) ions in response to extracellular acidification. Protonation of the pH sensor His-98 stabilizes C-type inactivation conformation likely converting the channel from outward K(+)-conducting, to inward Na(+)-conducting to nonconductive state. Homo- and heterodimerizes to form functional channels with distinct regulatory and gating properties. Allows K(+) currents with fast-gating kinetics important for the repolarization and hyperpolarization phases of action potentials. In cerebellar granule cells, heteromeric KCNK3:KCNK9 channel may hyperpolarize the resting membrane potential to limit intrinsic neuronal excitability, but once the action potential threshold is reached, it may support high-frequency action potential firing and increased neuronal excitability. Dispensable for central chemosensory respiration i.e. breathing controlled by brainstem CO2/pH, it rather conducts pH-sensitive currents and controls the firing rate of serotonergic raphe neurons involved in potentiation of the respiratory chemoreflex. Additionally, imparts chemosensitivity to type 1 cells in carotid bodies which respond to a decrease in arterial oxygen pressure or an increase in carbon dioxide pressure or pH to initiate adaptive changes in pulmonary ventilation. In adrenal gland, contributes to the maintenance of a hyperpolarized resting membrane potential of aldosterone-producing cells at zona glomerulosa and limits aldosterone release as part of a regulatory mechanism that controls arterial blood pressure and electrolyte homeostasis. In brown adipocytes, mediates K(+) efflux that counteracts norepinephrine-induced membrane depolarization, limits Ca(2+) efflux and downstream cAMP and PKA signaling, ultimately attenuating lipid oxidation and adaptive thermogenesis. The protein is Potassium channel subfamily K member 3 of Homo sapiens (Human).